We begin with the raw amino-acid sequence, 274 residues long: NH(3)-dependent NAD(+) synthetase (274 aa).

46 to 53 (GISGGQDS) lines the ATP pocket. Mg(2+) is bound at residue Asp-52. Arg-140 lines the deamido-NAD(+) pocket. Thr-160 provides a ligand contact to ATP. Glu-165 is a binding site for Mg(2+). The deamido-NAD(+) site is built by Lys-173 and Asp-180. ATP is bound by residues Lys-189 and Thr-211. 260-261 (HK) lines the deamido-NAD(+) pocket.

Belongs to the NAD synthetase family. As to quaternary structure, homodimer.

The enzyme catalyses deamido-NAD(+) + NH4(+) + ATP = AMP + diphosphate + NAD(+) + H(+). It participates in cofactor biosynthesis; NAD(+) biosynthesis; NAD(+) from deamido-NAD(+) (ammonia route): step 1/1. Catalyzes the ATP-dependent amidation of deamido-NAD to form NAD. Uses ammonia as a nitrogen source. The polypeptide is NH(3)-dependent NAD(+) synthetase (Streptococcus uberis (strain ATCC BAA-854 / 0140J)).